Here is a 103-residue protein sequence, read N- to C-terminus: Urease subunit beta (103 aa).

This sequence belongs to the urease beta subunit family. Heterotrimer of UreA (gamma), UreB (beta) and UreC (alpha) subunits. Three heterotrimers associate to form the active enzyme.

It is found in the cytoplasm. It carries out the reaction urea + 2 H2O + H(+) = hydrogencarbonate + 2 NH4(+). Its pathway is nitrogen metabolism; urea degradation; CO(2) and NH(3) from urea (urease route): step 1/1. Ureolysis may allow urea to be employed as a nitrogen source for growth and produces ammonia which may protect from killing at low pH. The protein is Urease subunit beta of Streptococcus salivarius (strain 57.I).